The sequence spans 206 residues: N-(5'-phosphoribosyl)anthranilate isomerase (206 aa).

The protein belongs to the TrpF family.

It carries out the reaction N-(5-phospho-beta-D-ribosyl)anthranilate = 1-(2-carboxyphenylamino)-1-deoxy-D-ribulose 5-phosphate. The protein operates within amino-acid biosynthesis; L-tryptophan biosynthesis; L-tryptophan from chorismate: step 3/5. The sequence is that of N-(5'-phosphoribosyl)anthranilate isomerase from Chlamydia caviae (strain ATCC VR-813 / DSM 19441 / 03DC25 / GPIC) (Chlamydophila caviae).